Consider the following 101-residue polypeptide: MAKKSMIQRELKREKLVAKYAQKRAEFKAIILDINSTEEQIWEAQIKLQKLPVNSSASRVQRRCKVTGRPHAVYRKFGLCRNKLREYAMAGDVPGLKKASW.

It belongs to the universal ribosomal protein uS14 family. Part of the 30S ribosomal subunit. Contacts proteins S3 and S10.

Binds 16S rRNA, required for the assembly of 30S particles and may also be responsible for determining the conformation of the 16S rRNA at the A site. This is Small ribosomal subunit protein uS14 from Francisella tularensis subsp. tularensis (strain FSC 198).